A 510-amino-acid chain; its full sequence is Lysine--tRNA ligase (510 aa).

Mg(2+)-binding residues include E420 and E427.

Belongs to the class-II aminoacyl-tRNA synthetase family. In terms of assembly, homodimer. Mg(2+) is required as a cofactor.

Its subcellular location is the cytoplasm. The catalysed reaction is tRNA(Lys) + L-lysine + ATP = L-lysyl-tRNA(Lys) + AMP + diphosphate. This is Lysine--tRNA ligase (lysS) from Vibrio cholerae serotype O1 (strain ATCC 39315 / El Tor Inaba N16961).